A 288-amino-acid chain; its full sequence is Pantothenate synthetase (288 aa).

27–34 (MGALHEGH) is an ATP binding site. His34 serves as the catalytic Proton donor. (R)-pantoate contacts are provided by Gln58 and Gln150. Residue Gln58 coordinates beta-alanine. ATP-binding positions include Leu173 and 181 to 184 (YSSR).

It belongs to the pantothenate synthetase family. As to quaternary structure, homodimer.

The protein resides in the cytoplasm. The catalysed reaction is (R)-pantoate + beta-alanine + ATP = (R)-pantothenate + AMP + diphosphate + H(+). Its pathway is cofactor biosynthesis; (R)-pantothenate biosynthesis; (R)-pantothenate from (R)-pantoate and beta-alanine: step 1/1. In terms of biological role, catalyzes the condensation of pantoate with beta-alanine in an ATP-dependent reaction via a pantoyl-adenylate intermediate. The sequence is that of Pantothenate synthetase from Tropheryma whipplei (strain TW08/27) (Whipple's bacillus).